Here is a 462-residue protein sequence, read N- to C-terminus: Arginine-specific demethylase JMJ20 (462 aa).

In terms of domain architecture, JmjC spans 115–287 (VKEYPDYTAY…WVWDLLWKDY (173 aa)). Positions 177, 179, and 255 each coordinate Fe cation.

Belongs to the JARID1 histone demethylase family. It depends on Fe(2+) as a cofactor. As to expression, mostly expressed in leaves, and, to a lower extent, in inflorescences, roots, siliques and stems.

The protein localises to the nucleus. The catalysed reaction is N(omega),N(omega)-dimethyl-L-arginyl-[protein] + 2-oxoglutarate + O2 = N(omega)-methyl-L-arginyl-[protein] + formaldehyde + succinate + CO2. Functionally, histone demethylase that demethylates 'Arg-3' (H4R3me) of histone H4 with a specific activity for H4R3me2. Involved in the positive regulation of gene expression. Together with JMJ22, positively regulates seed germination by promoting the removal of repressive histone arginine methylations (e.g. H4R3me2) at GA3ox1 and GA3ox2 to trigger gibberellic acid (GA) biosynthesis. This Arabidopsis thaliana (Mouse-ear cress) protein is Arginine-specific demethylase JMJ20.